The sequence spans 246 residues: Neuromodulin (246 aa).

The interval 1–246 (MLCCMRRTKQ…EESKADQENA (246 aa)) is disordered. S-palmitoyl cysteine attachment occurs at residues cysteine 3 and cysteine 4. The span at 9–33 (KQVEKNEDGDQKIEQDGIKPEDKAH) shows a compositional bias: basic and acidic residues. Positions 32–61 (AHKAATKIQASFRGHITRKKLKGEKKADAP) constitute an IQ domain. Low complexity-rich tracts occupy residues 87 to 99 (ASAA…ADSA) and 125 to 157 (SEQP…KAST). Residues 164 to 176 (KADEAQDKEEPKQ) show a composition bias toward basic and acidic residues. Positions 177–203 (ADVPAADTTATTTPAAEDATAKATAQP) are enriched in low complexity. Composition is skewed to basic and acidic residues over residues 213 to 225 (TEEK…ETKP) and 237 to 246 (EESKADQENA).

This sequence belongs to the neuromodulin family. As to quaternary structure, binds calmodulin with a greater affinity in the absence of Ca(2+) than in its presence. In terms of processing, palmitoylated. Palmitoylation is essential for plasma membrane association. As to expression, expressed in neurons.

Its subcellular location is the cell membrane. The protein localises to the cell projection. It is found in the growth cone membrane. It localises to the synapse. The protein resides in the filopodium membrane. In terms of biological role, this protein is associated with nerve growth. It is a major component of the motile 'growth cones' that form the tips of elongating axons. Plays a role in axonal and dendritic filopodia induction. The protein is Neuromodulin (GAP43) of Gallus gallus (Chicken).